We begin with the raw amino-acid sequence, 1457 residues long: Bridge-like lipid transfer protein family member 3B (1457 aa).

Positions 3–94 constitute a Chorein N-terminal domain; it reads GIIKKQILKH…DKVIMEMSTC (92 aa). Disordered regions lie at residues 267 to 295 and 409 to 449; these read STEQ…KTPQ and DRNL…PQPS. Polar residues predominate over residues 278-295; sequence PTQSSTVTSSAQHVKTPQ. 4 positions are modified to phosphoserine: Ser-414, Ser-418, Ser-774, and Ser-934. Disordered stretches follow at residues 975–1038, 1056–1099, and 1145–1183; these read SEDE…TGKG, ASLS…LSVS, and SNTS…TQEN. The span at 980 to 995 shows a compositional bias: polar residues; that stretch reads SGLSHKSGSGEMTSEG. The residue at position 1008 (Ser-1008) is a Phosphoserine. The span at 1145-1180 shows a compositional bias: polar residues; sequence SNTSCQSPAESVNTSANTQTCGEASPEAVSTNSEGT. Positions 1410–1455 form a coiled coil; that stretch reads ANFLDITREQLMEENECLRQRLAQAKMELAEAHSARDELLHQMKRM.

In terms of assembly, homodimer (via N-terminus). Associates with the Golgi-associated retrograde protein (GARP) complex. Interacts with GARP complex component VPS52. Interacts (via C-terminal coiled-coil domain) with STX6.

It is found in the cytoplasm. The protein localises to the cytosol. It localises to the early endosome. In terms of biological role, tube-forming lipid transport protein which mediates the transfer of lipids between membranes at organelle contact sites. Required for retrograde traffic of vesicle clusters in the early endocytic pathway to the Golgi complex. The chain is Bridge-like lipid transfer protein family member 3B (Bltp3b) from Mus musculus (Mouse).